The following is a 706-amino-acid chain: Ribosomal RNA large subunit methyltransferase K/L (706 aa).

Positions 43–154 constitute a THUMP domain; that stretch reads LMYQSLLWSR…RDMASVALDL (112 aa).

It belongs to the methyltransferase superfamily. RlmKL family.

Its subcellular location is the cytoplasm. The enzyme catalyses guanosine(2445) in 23S rRNA + S-adenosyl-L-methionine = N(2)-methylguanosine(2445) in 23S rRNA + S-adenosyl-L-homocysteine + H(+). It catalyses the reaction guanosine(2069) in 23S rRNA + S-adenosyl-L-methionine = N(2)-methylguanosine(2069) in 23S rRNA + S-adenosyl-L-homocysteine + H(+). Functionally, specifically methylates the guanine in position 2445 (m2G2445) and the guanine in position 2069 (m7G2069) of 23S rRNA. This is Ribosomal RNA large subunit methyltransferase K/L from Yersinia pestis bv. Antiqua (strain Antiqua).